A 716-amino-acid polypeptide reads, in one-letter code: Cytoplasmic polyadenylation element-binding protein 3 (716 aa).

Residues 1-11 (MQDDLLMDKSK) are compositionally biased toward basic and acidic residues. Disordered stretches follow at residues 1-118 (MQDD…WSTG) and 162-209 (AQTQ…RSAA). 2 stretches are compositionally biased toward low complexity: residues 13–31 (QPQS…QQLQ) and 54–63 (SSAVPALSPA). Over residues 91-100 (PQQPPPPQEP) the composition is skewed to pro residues. Residues 107–118 (LSPSFGSTWSTG) are compositionally biased toward polar residues. A compositionally biased stretch (pro residues) spans 169–186 (QPPPPAPQPPQPAQPPQA). The segment covering 187 to 209 (QPSQQRRSPASPSQAPYAQRSAA) has biased composition (low complexity). Phosphoserine is present on residues Ser-194, Ser-197, and Ser-291. Arg-309 is modified (asymmetric dimethylarginine). Phosphoserine occurs at positions 419 and 420. RRM domains are found at residues 459–550 (RKVF…PWNL) and 567–649 (KTIF…PYVL).

Belongs to the RRM CPEB family. Following synaptic activity, aggregates to form amyloid-like oligomers. Aggregation requires an intact actin cytoskeleton. Interacts with STAT5B; this inhibits STAT5B-mediated transcriptional activation. Interacts with E3 ubiquitin-protein ligase NEURL1; this leads to monoubiquitination and activation of CPEB3. Interacts with CAPN2; this leads to cleavage of CPEB3. Interacts (via C-terminal RNA-binding region) with TOB1; TOB1 also binds CNOT7/CAF1 and recruits it to CPEB3 to form a ternary complex. Interacts with SUMO-conjugating enzyme UBC9. Interacts with IPO5; the interaction is enhanced in a RAN-regulated manner following neuronal stimulation and mediates CPEB3 nuclear import. Interacts with exportin XPO1/CRM1. Activated by NEURL1-mediated monoubiquitination, resulting in the growth of new dendritic spines and increased levels of GRIA1 and GRIA2. NEURL1-mediated monoubiquitination facilitates synaptic plasticity and hippocampal-dependent memory storage. In terms of processing, under basal unstimulated conditions when CPEB3 is mainly unaggregated, sumoylated and acts as a translational repressor. Following neuronal stimulation, becomes desumoylated and aggregated which is required for the translation of mRNA targets and for dendritic filopodia formation. Post-translationally, following neuronal stimulation, cleaved by CAPN2 which abolishes its translational repressor activity, leading to translation of CPEB3 target mRNAs. Phosphorylation is enhanced by neuronal stimulation. As to expression, highly expressed in brain (at protein level). In brain, expressed in the hippocampus, granule cells and interneurons of the cerebellum, and mitral cells of the olfactory bulb (at protein level). Detected in the spinal cord and in peripheral dorsal root ganglia (at protein level). In the retina, strongly expressed in the retinal ganglion layer and, to a lesser extent, in the inner margin of the inner nuclear layer with expression also detected in the inner and outer plexiform layers (at protein level). Highly expressed in brain and heart, less in liver, kidney, embryo, skeletal muscle, lung and ovary. Weakly expressed in granular cells of dentate gyrus and the pyramidal cells of CA3 and CA1 of the hippocampus.

Its subcellular location is the cytoplasm. The protein localises to the nucleus. The protein resides in the synapse. It localises to the cell projection. It is found in the dendrite. Its subcellular location is the postsynaptic density. Sequence-specific RNA-binding protein which acts as a translational repressor in the basal unstimulated state but, following neuronal stimulation, acts as a translational activator. In contrast to CPEB1, does not bind to the cytoplasmic polyadenylation element (CPE), a uridine-rich sequence element within the mRNA 3'-UTR, but binds to a U-rich loop within a stem-loop structure. Required for the consolidation and maintenance of hippocampal-based long term memory. In the basal state, binds to the mRNA 3'-UTR of the glutamate receptors GRIA1 and GRIA2 and negatively regulates their translation. Also represses the translation of DLG4, GRIN1 GRIN2A and GRIN2B. When activated, acts as a translational activator of GRIA1 and GRIA2. In the basal state, suppresses SUMO2 translation but activates it following neuronal stimulation. Binds to the 3'-UTR of TRPV1 mRNA and represses TRPV1 translation which is required to maintain normal thermoception. Binds actin mRNA, leading to actin translational repression in the basal state and to translational activation following neuronal stimulation. Negatively regulates target mRNA levels by binding to TOB1 which recruits CNOT7/CAF1 to a ternary complex and this leads to target mRNA deadenylation and decay. In addition to its role in translation, binds to and inhibits the transcriptional activation activity of STAT5B without affecting its dimerization or DNA-binding activity. This, in turn, represses transcription of the STAT5B target gene EGFR which has been shown to play a role in enhancing learning and memory performance. In contrast to CPEB1, CPEB2 and CPEB4, not required for cell cycle progression. The protein is Cytoplasmic polyadenylation element-binding protein 3 (Cpeb3) of Mus musculus (Mouse).